Reading from the N-terminus, the 318-residue chain is tRNA uridine(34) hydroxylase (318 aa).

The Rhodanese domain occupies 123–217 (EDDDTVIIDA…YGKDPETKGQ (95 aa)). Cys-177 serves as the catalytic Cysteine persulfide intermediate.

Belongs to the TrhO family.

The catalysed reaction is uridine(34) in tRNA + AH2 + O2 = 5-hydroxyuridine(34) in tRNA + A + H2O. In terms of biological role, catalyzes oxygen-dependent 5-hydroxyuridine (ho5U) modification at position 34 in tRNAs. This is tRNA uridine(34) hydroxylase from Staphylococcus aureus (strain Mu3 / ATCC 700698).